Consider the following 535-residue polypeptide: Probable anion transporter 2, chloroplastic (535 aa).

The N-terminal 95 residues, 1 to 95, are a transit peptide targeting the chloroplast; that stretch reads MASIRSCVSV…RERAVAAMCS (95 aa). Transmembrane regions (helical) follow at residues 125–145, 160–180, 191–211, 215–235, 254–274, 279–299, 343–363, 381–401, 413–433, 443–463, 483–503, and 504–524; these read VVAL…VMSV, FLGI…MVGG, VMAG…WAAS, IMLL…FPTM, ISMG…PIIM, LAGT…VWLF, IEMW…FVLL, AAWF…VAGA, VALV…VSLL, VAAV…AGYF, GIGT…VQWL, and GSFQ…TVFY.

It belongs to the major facilitator superfamily. Sodium/anion cotransporter (TC 2.A.1.14) family.

The protein localises to the plastid. Its subcellular location is the chloroplast membrane. Functionally, probable anion transporter. The sequence is that of Probable anion transporter 2, chloroplastic (PHT4;2) from Oryza sativa subsp. japonica (Rice).